Consider the following 633-residue polypeptide: Extracellular metalloproteinase 5 (633 aa).

A signal peptide spans 1–21 (MHGLLLAAAGLLSLPLHVIAH). The propeptide occupies 22–245 (PQPSTNLAGR…HNVVDYVSHA (224 aa)). N-linked (GlcNAc...) asparagine glycosylation is present at asparagine 286. Position 428 (histidine 428) interacts with Zn(2+). Glutamate 429 is an active-site residue. Histidine 432 lines the Zn(2+) pocket. Residues asparagine 592 and asparagine 621 are each glycosylated (N-linked (GlcNAc...) asparagine).

This sequence belongs to the peptidase M36 family. Zn(2+) is required as a cofactor.

The protein resides in the secreted. Its function is as follows. Secreted metalloproteinase probably acting as a virulence factor. The sequence is that of Extracellular metalloproteinase 5 (MEP5) from Arthroderma benhamiae (Trichophyton mentagrophytes).